The primary structure comprises 92 residues: DNA-binding protein HU 1 (92 aa).

Thr4 carries the post-translational modification Phosphothreonine.

The protein belongs to the bacterial histone-like protein family. Homodimer. In terms of assembly, (Microbial infection) Interacts with Bacillus phage SP01 Gp46; the interaction replaces dsDNA from the hbs-DNA complex.

The protein resides in the cytoplasm. The protein localises to the nucleoid. Histone-like DNA-binding protein which introduces negative supercoils in relaxed plasmid DNA in the presence of topoisomerase I. There are at least 20,000 monomers/cell. Capable of wrapping DNA to stabilize it, and thus to prevent its denaturation under extreme environmental conditions. Binds evenly across chromosome, does not display a preference for AT content. Binds ss- and dsDNA in a sequence non-specific manner; 8 nucleotides are sufficient to bind protein. The polypeptide is DNA-binding protein HU 1 (Bacillus subtilis (strain 168)).